Here is a 308-residue protein sequence, read N- to C-terminus: Ribosomal RNA small subunit methyltransferase H (308 aa).

S-adenosyl-L-methionine-binding positions include 33–35 (GGH), D52, Y81, D99, and Q106.

Belongs to the methyltransferase superfamily. RsmH family.

It is found in the cytoplasm. It catalyses the reaction cytidine(1402) in 16S rRNA + S-adenosyl-L-methionine = N(4)-methylcytidine(1402) in 16S rRNA + S-adenosyl-L-homocysteine + H(+). Its function is as follows. Specifically methylates the N4 position of cytidine in position 1402 (C1402) of 16S rRNA. The sequence is that of Ribosomal RNA small subunit methyltransferase H from Francisella philomiragia subsp. philomiragia (strain ATCC 25017 / CCUG 19701 / FSC 153 / O#319-036).